The chain runs to 802 residues: Elongation factor G, mitochondrial (802 aa).

The N-terminal 24 residues, Met-1–Leu-24, are a transit peptide targeting the mitochondrion. The region spanning Ser-100–Ser-387 is the tr-type G domain. Residues Ala-109 to Thr-116, Asp-185 to His-189, and Asn-239 to Asp-242 contribute to the GTP site.

It belongs to the TRAFAC class translation factor GTPase superfamily. Classic translation factor GTPase family. EF-G/EF-2 subfamily.

The protein localises to the mitochondrion. Its pathway is protein biosynthesis; polypeptide chain elongation. Its function is as follows. Mitochondrial GTPase that catalyzes the GTP-dependent ribosomal translocation step during translation elongation. During this step, the ribosome changes from the pre-translocational (PRE) to the post-translocational (POST) state as the newly formed A-site-bound peptidyl-tRNA and P-site-bound deacylated tRNA move to the P and E sites, respectively. Catalyzes the coordinated movement of the two tRNA molecules, the mRNA and conformational changes in the ribosome. The protein is Elongation factor G, mitochondrial (mef1) of Aspergillus fumigatus (strain CBS 144.89 / FGSC A1163 / CEA10) (Neosartorya fumigata).